A 317-amino-acid polypeptide reads, in one-letter code: DNA-directed RNA polymerase subunit alpha (317 aa).

An alpha N-terminal domain (alpha-NTD) region spans residues 1-234 (MKQFVRPEFI…AHLEFFIDLN (234 aa)). Positions 249–317 (DDKELDRTVE…ASLGLAFRQS (69 aa)) are alpha C-terminal domain (alpha-CTD).

Belongs to the RNA polymerase alpha chain family. As to quaternary structure, homodimer. The RNAP catalytic core consists of 2 alpha, 1 beta, 1 beta' and 1 omega subunit. When a sigma factor is associated with the core the holoenzyme is formed, which can initiate transcription.

The enzyme catalyses RNA(n) + a ribonucleoside 5'-triphosphate = RNA(n+1) + diphosphate. Its function is as follows. DNA-dependent RNA polymerase catalyzes the transcription of DNA into RNA using the four ribonucleoside triphosphates as substrates. The protein is DNA-directed RNA polymerase subunit alpha of Mycoplasma capricolum subsp. capricolum (strain California kid / ATCC 27343 / NCTC 10154).